The following is a 145-amino-acid chain: ATP synthase epsilon chain (145 aa).

The tract at residues 100–123 (RAQRAKQRAEDAIKTASEKHDSDE) is disordered. Positions 106-123 (QRAEDAIKTASEKHDSDE) are enriched in basic and acidic residues.

Belongs to the ATPase epsilon chain family. In terms of assembly, F-type ATPases have 2 components, CF(1) - the catalytic core - and CF(0) - the membrane proton channel. CF(1) has five subunits: alpha(3), beta(3), gamma(1), delta(1), epsilon(1). CF(0) has three main subunits: a, b and c.

The protein localises to the cell membrane. Its function is as follows. Produces ATP from ADP in the presence of a proton gradient across the membrane. This chain is ATP synthase epsilon chain, found in Latilactobacillus sakei subsp. sakei (strain 23K) (Lactobacillus sakei subsp. sakei).